The primary structure comprises 172 residues: Shikimate kinase (172 aa).

14-19 (GAGKST) contributes to the ATP binding site. Serine 18 lines the Mg(2+) pocket. Substrate is bound by residues aspartate 36, arginine 60, and glycine 82. Position 120 (arginine 120) interacts with ATP. Arginine 139 contributes to the substrate binding site. Glutamine 156 is an ATP binding site.

This sequence belongs to the shikimate kinase family. In terms of assembly, monomer. It depends on Mg(2+) as a cofactor.

The protein resides in the cytoplasm. It carries out the reaction shikimate + ATP = 3-phosphoshikimate + ADP + H(+). It functions in the pathway metabolic intermediate biosynthesis; chorismate biosynthesis; chorismate from D-erythrose 4-phosphate and phosphoenolpyruvate: step 5/7. Its function is as follows. Catalyzes the specific phosphorylation of the 3-hydroxyl group of shikimic acid using ATP as a cosubstrate. This Vibrio campbellii (strain ATCC BAA-1116) protein is Shikimate kinase.